Here is a 378-residue protein sequence, read N- to C-terminus: Ribosomal RNA large subunit methyltransferase G (378 aa).

This sequence belongs to the methyltransferase superfamily. RlmG family.

Its subcellular location is the cytoplasm. It catalyses the reaction guanosine(1835) in 23S rRNA + S-adenosyl-L-methionine = N(2)-methylguanosine(1835) in 23S rRNA + S-adenosyl-L-homocysteine + H(+). Functionally, specifically methylates the guanine in position 1835 (m2G1835) of 23S rRNA. The polypeptide is Ribosomal RNA large subunit methyltransferase G (Salmonella paratyphi B (strain ATCC BAA-1250 / SPB7)).